We begin with the raw amino-acid sequence, 261 residues long: Small ribosomal subunit protein eS1 (261 aa).

Residues 1–18 (MAVGKNKRISKGKKGGKK) are compositionally biased toward basic residues. The disordered stretch occupies residues 1 to 21 (MAVGKNKRISKGKKGGKKKAT).

It belongs to the eukaryotic ribosomal protein eS1 family. As to quaternary structure, component of the small ribosomal subunit. Mature ribosomes consist of a small (40S) and a large (60S) subunit. The 40S subunit contains about 33 different proteins and 1 molecule of RNA (18S). The 60S subunit contains about 49 different proteins and 3 molecules of RNA (25S, 5.8S and 5S).

Its subcellular location is the cytoplasm. The polypeptide is Small ribosomal subunit protein eS1 (cyc07) (Daucus carota (Wild carrot)).